We begin with the raw amino-acid sequence, 441 residues long: EMI domain-containing protein 1 (441 aa).

The N-terminal stretch at 1–22 (MGGPRAWALLCLGLLLPGGGAA) is a signal peptide. One can recognise an EMI domain in the interval 33–106 (RRNWCSYVVT…PGHSGVSCEE (74 aa)). Intrachain disulfides connect Cys37/Cys96, Cys62/Cys68, and Cys95/Cys104. The O-linked (Fuc) threonine glycan is linked to Thr42. The N-linked (GlcNAc...) asparagine glycan is linked to Asn51. N-linked (GlcNAc...) asparagine glycosylation occurs at Asn136. 2 disordered regions span residues 162 to 371 (QPVP…KSHW) and 405 to 441 (SGAG…DERG). 2 stretches are compositionally biased toward pro residues: residues 163–184 (PVPP…PPAQ) and 222–231 (PPGPQGPPGS). In terms of domain architecture, Collagen-like spans 179–368 (GPPPAQGSPG…PGPKGDPGEK (190 aa)). Residues 232-243 (PGRAGAVGTPGE) show a composition bias toward low complexity. Residues 244-264 (RGPPGPPGPPGPPGPPAPVGP) are compositionally biased toward pro residues. The segment covering 277 to 288 (LSNTFTETNNHW) has biased composition (polar residues). A compositionally biased stretch (pro residues) spans 292–311 (PTGPPGPPGPMGPPGPPGPT). 2 stretches are compositionally biased toward basic and acidic residues: residues 335–344 (PGEKGERGLR) and 359–371 (PGPK…KSHW).

In terms of assembly, homo- or heteromers. O-fucosylated at Thr-42 within the EMI domain by FUT10/POFUT3 and FUT11/POFUT4.

The protein resides in the secreted. It is found in the extracellular space. Its subcellular location is the extracellular matrix. The protein is EMI domain-containing protein 1 (EMID1) of Homo sapiens (Human).